The primary structure comprises 447 residues: Phosphoglucosamine mutase (447 aa).

The Phosphoserine intermediate role is filled by Ser-104. Mg(2+)-binding residues include Ser-104, Asp-243, Asp-245, and Asp-247. Ser-104 is modified (phosphoserine).

This sequence belongs to the phosphohexose mutase family. The cofactor is Mg(2+). In terms of processing, activated by phosphorylation.

The enzyme catalyses alpha-D-glucosamine 1-phosphate = D-glucosamine 6-phosphate. Its function is as follows. Catalyzes the conversion of glucosamine-6-phosphate to glucosamine-1-phosphate. The protein is Phosphoglucosamine mutase of Corynebacterium glutamicum (strain ATCC 13032 / DSM 20300 / JCM 1318 / BCRC 11384 / CCUG 27702 / LMG 3730 / NBRC 12168 / NCIMB 10025 / NRRL B-2784 / 534).